We begin with the raw amino-acid sequence, 382 residues long: 3-isopropylmalate dehydrogenase (382 aa).

91–102 (GPKWGTGSVRPE) contributes to the NAD(+) binding site. The substrate site is built by arginine 109, arginine 119, arginine 148, and aspartate 240. Residues aspartate 240, aspartate 265, and aspartate 269 each coordinate Mg(2+). 304–315 (GSAPDLTENKVN) is an NAD(+) binding site.

This sequence belongs to the isocitrate and isopropylmalate dehydrogenases family. Homodimer. Requires Mg(2+) as cofactor. The cofactor is Mn(2+).

It localises to the cytoplasm. It catalyses the reaction (2R,3S)-3-isopropylmalate + NAD(+) = 4-methyl-2-oxopentanoate + CO2 + NADH. It functions in the pathway amino-acid biosynthesis; L-leucine biosynthesis; L-leucine from 3-methyl-2-oxobutanoate: step 3/4. Its function is as follows. Catalyzes the oxidation of 3-carboxy-2-hydroxy-4-methylpentanoate (3-isopropylmalate) to 3-carboxy-4-methyl-2-oxopentanoate. The product decarboxylates to 4-methyl-2 oxopentanoate. This Debaryomyces hansenii (strain ATCC 36239 / CBS 767 / BCRC 21394 / JCM 1990 / NBRC 0083 / IGC 2968) (Yeast) protein is 3-isopropylmalate dehydrogenase (LEU2).